A 41-amino-acid polypeptide reads, in one-letter code: uncharacterized protein (41 aa).

This is an uncharacterized protein from Bacillus subtilis (strain 168).